A 27-amino-acid polypeptide reads, in one-letter code: Caerulein precursor fragment R2 (27 aa).

In terms of tissue distribution, expressed by the skin glands.

The protein localises to the secreted. In terms of biological role, antimicrobial peptide. The sequence is that of Caerulein precursor fragment R2 from Xenopus ruwenzoriensis (Uganda clawed frog).